The chain runs to 589 residues: Oligo-1,6-glucosidase IMA2 (589 aa).

Aspartate 215 acts as the Nucleophile in catalysis. Glutamate 277 functions as the Proton donor in the catalytic mechanism.

It belongs to the glycosyl hydrolase 13 family.

It catalyses the reaction Hydrolysis of (1-&gt;6)-alpha-D-glucosidic linkages in some oligosaccharides produced from starch and glycogen by alpha-amylase, and in isomaltose.. Alpha-glucosidase with specificity for isomaltase, methyl-alpha-glucoside, and palatinose. The sequence is that of Oligo-1,6-glucosidase IMA2 (IMA2) from Saccharomyces cerevisiae (strain ATCC 204508 / S288c) (Baker's yeast).